Here is a 65-residue protein sequence, read N- to C-terminus: Large ribosomal subunit protein uL29 (65 aa).

The protein belongs to the universal ribosomal protein uL29 family.

In Desulforamulus reducens (strain ATCC BAA-1160 / DSM 100696 / MI-1) (Desulfotomaculum reducens), this protein is Large ribosomal subunit protein uL29.